Reading from the N-terminus, the 834-residue chain is Translation factor GUF1 homolog, mitochondrial (834 aa).

The N-terminal 66 residues, 1-66 (MKLCGVRSSG…RPLLAEPRRY (66 aa)), are a transit peptide targeting the mitochondrion. The 186-residue stretch at 129-314 (ACIRNVSVVA…HIIDKVPPPC (186 aa)) folds into the tr-type G domain. Residues 138 to 145 (AHVDHGKT), 205 to 209 (DTPGH), and 259 to 262 (TKMD) each bind GTP. Disordered stretches follow at residues 363–385 (GAAS…ASGG) and 476–507 (TGSP…SSSV). A compositionally biased stretch (low complexity) spans 488 to 507 (ATAAETASSDDASGSGSSSV).

The protein belongs to the TRAFAC class translation factor GTPase superfamily. Classic translation factor GTPase family. LepA subfamily.

It is found in the mitochondrion inner membrane. It catalyses the reaction GTP + H2O = GDP + phosphate + H(+). In terms of biological role, promotes mitochondrial protein synthesis. May act as a fidelity factor of the translation reaction, by catalyzing a one-codon backward translocation of tRNAs on improperly translocated ribosomes. Binds to mitochondrial ribosomes in a GTP-dependent manner. The protein is Translation factor GUF1 homolog, mitochondrial of Leishmania infantum.